The sequence spans 503 residues: Endoglycoceramidase (503 aa).

An N-terminal signal peptide occupies residues 1–21 (MAETQPLVFVLMSISAILTAG). N-linked (GlcNAc...) asparagine glycans are attached at residues asparagine 72, asparagine 108, and asparagine 205. Catalysis depends on glutamate 239, which acts as the Proton donor. 3 N-linked (GlcNAc...) asparagine glycosylation sites follow: asparagine 307, asparagine 409, and asparagine 485.

The protein belongs to the glycosyl hydrolase 5 (cellulase A) family.

It localises to the secreted. The protein localises to the nematocyst. It carries out the reaction an oligoglycosyl-(1-&gt;4)-beta-D-glucosyl-(1&lt;-&gt;1)-ceramide + H2O = an oligoglycosyl-(1-&gt;4)-D-glucose + an N-acyl-sphingoid base. Its activity is regulated as follows. Completely inhibited by Hg(2+). Cu(2+) and zinc have no effect on enzyme activity. Lithium, potassium, manganese, Ni(2+), calcium, magnesium and EDTA have no significant effect on enzyme activity. Enzyme requires presence of detergents such as Triton X-100 and Lubrol PX for the hydrolysis of glycosphingolipids. Taurodeoxycholate strongly inhibits the enzyme activity and SDS completely inhibits the enzyme activity. In terms of biological role, hydrolysis of the glycosidic linkage between oligosaccharides and ceramides of glycosphingolipids, especially b-series polysialogangliosides. This is Endoglycoceramidase from Cyanea nozakii (Jellyfish).